The primary structure comprises 622 residues: Coiled-coil domain-containing protein 17 (622 aa).

3 coiled-coil regions span residues 81 to 102 (RSALKRLTEEVQWLRLSLQEMR), 146 to 207 (ARRV…LEVL), and 294 to 320 (GELPVVEAENRRLEAEILALQMQRGRA). Disordered stretches follow at residues 334–356 (SLQPKGRRDPPLLPPPVAPPLPP) and 584–622 (PAVGFADPPPRTEEPLSGVKDRDEGLGPHHSSDLPPVSF). Over residues 344-356 (PLLPPPVAPPLPP) the composition is skewed to pro residues. A compositionally biased stretch (basic and acidic residues) spans 593–615 (PRTEEPLSGVKDRDEGLGPHHSS).

This is Coiled-coil domain-containing protein 17 (CCDC17) from Homo sapiens (Human).